Consider the following 134-residue polypeptide: ATP synthase epsilon chain (134 aa).

Belongs to the ATPase epsilon chain family. F-type ATPases have 2 components, CF(1) - the catalytic core - and CF(0) - the membrane proton channel. CF(1) has five subunits: alpha(3), beta(3), gamma(1), delta(1), epsilon(1). CF(0) has three main subunits: a, b and c.

The protein resides in the cellular thylakoid membrane. Its function is as follows. Produces ATP from ADP in the presence of a proton gradient across the membrane. This Prochlorococcus marinus (strain MIT 9515) protein is ATP synthase epsilon chain.